A 231-amino-acid chain; its full sequence is mRNA-decapping enzyme subunit 1 (231 aa).

The segment at 92 to 120 (QNGSNNIQVNNGSDNSNRNSSGNGNSYKS) is disordered. Positions 101-120 (NNGSDNSNRNSSGNGNSYKS) are enriched in low complexity.

This sequence belongs to the DCP1 family. Component of the decapping complex composed of DCP1 and DCP2. Interacts with mRNAs, DHH1, LSM1, LSM2, LSM3, LSM4, LSM5, LSM6, LSM7, and the cap-binding proteins PAB1 and TIF4632/eIF-4G. In terms of processing, phosphorylated.

It is found in the cytoplasm. The protein resides in the P-body. In terms of biological role, component of the decapping complex necessary for the degradation of mRNAs, both in normal mRNA turnover and in nonsense-mediated mRNA decay. Removes the 7-methyl guanine cap structure from mRNA molecules, yielding a 5'-phosphorylated mRNA fragment and 7m-GDP. Decapping is the major pathway of mRNA degradation in yeast. It occurs through deadenylation, decapping and subsequent 5' to 3' exonucleolytic decay of the transcript body. DCP1 is activated by the DEAD-box helicase DHH1 and destabilizes the eIF-4F cap-binding complex from the mRNA. In Saccharomyces cerevisiae (strain ATCC 204508 / S288c) (Baker's yeast), this protein is mRNA-decapping enzyme subunit 1 (DCP1).